The following is a 141-amino-acid chain: Lutropin subunit beta (141 aa).

Positions 1–20 (MEMLQGLLLWLLLSMGGARA) are cleaved as a signal peptide. 6 disulfides stabilise this stretch: C29-C77, C43-C92, C46-C130, C54-C108, C58-C110, and C113-C120. Residues N33 and N50 are each glycosylated (N-linked (GlcNAc...) asparagine).

Belongs to the glycoprotein hormones subunit beta family. Heterodimer of a common alpha chain and a unique beta chain which confers biological specificity to thyrotropin, lutropin, follitropin and gonadotropin.

Its subcellular location is the secreted. Its function is as follows. Promotes spermatogenesis and ovulation by stimulating the testes and ovaries to synthesize steroids. The sequence is that of Lutropin subunit beta (LHB) from Macaca fascicularis (Crab-eating macaque).